Here is a 650-residue protein sequence, read N- to C-terminus: Chaperone protein DnaK (650 aa).

Thr200 bears the Phosphothreonine; by autocatalysis mark. Residues 614–634 (AGAAGAAGAAEGAAHAGGAQQ) form a disordered region.

The protein belongs to the heat shock protein 70 family.

Functionally, acts as a chaperone. The chain is Chaperone protein DnaK from Burkholderia cenocepacia (strain ATCC BAA-245 / DSM 16553 / LMG 16656 / NCTC 13227 / J2315 / CF5610) (Burkholderia cepacia (strain J2315)).